The following is a 452-amino-acid chain: Tripartite motif-containing protein 51 (452 aa).

The segment at 15 to 56 (CPICMNYFLDPVTIDCGHSFCRPCLYLNWQDTAVLAQCSECK) adopts an RING-type zinc-finger fold. A B box-type zinc finger spans residues 88–129 (SEEQICGMHRETKKMFCEVDKSLLCLPCSNSQEHRNHIHCPI). Residues Cys93, His96, Cys115, and His121 each coordinate Zn(2+). A B30.2/SPRY domain is found at 269–452 (ELSAGPITGL…LRPIFCCSHF (184 aa)).

Belongs to the TRIM/RBCC family.

In Homo sapiens (Human), this protein is Tripartite motif-containing protein 51 (TRIM51).